The following is a 72-amino-acid chain: Palustrin-2CG1 (72 aa).

The first 22 residues, 1 to 22 (MFTMKKPLLLLFFLGTISLSLC), serve as a signal peptide directing secretion. The propeptide at 23–39 (QEERGADEDDGEMTEEV) is removed in mature form. Cysteine 64 and cysteine 70 are oxidised to a cystine.

In terms of tissue distribution, expressed by the skin glands.

Its subcellular location is the secreted. Antimicrobial peptide active against a variety of Gram-positive and some Gram-negative bacterial strains. Has antifungal activity against a slime mold isolate. Has hemolytic activity against human erythrocytes. This chain is Palustrin-2CG1, found in Amolops chunganensis (Chungan torrent frog).